We begin with the raw amino-acid sequence, 609 residues long: Glutamine--fructose-6-phosphate aminotransferase [isomerizing] (609 aa).

Cys2 serves as the catalytic Nucleophile; for GATase activity. Residues 2 to 219 form the Glutamine amidotransferase type-2 domain; the sequence is CGIFGYIGAK…SGELAVVGLG (218 aa). 2 SIS domains span residues 280-426 and 458-599; these read ISEK…LKQT and WAND…IDRP. Residue Lys604 is the For Fru-6P isomerization activity of the active site.

As to quaternary structure, homodimer.

The protein resides in the cytoplasm. It carries out the reaction D-fructose 6-phosphate + L-glutamine = D-glucosamine 6-phosphate + L-glutamate. Catalyzes the first step in hexosamine metabolism, converting fructose-6P into glucosamine-6P using glutamine as a nitrogen source. This is Glutamine--fructose-6-phosphate aminotransferase [isomerizing] from Chlamydia caviae (strain ATCC VR-813 / DSM 19441 / 03DC25 / GPIC) (Chlamydophila caviae).